A 196-amino-acid chain; its full sequence is MNLVVIEGIDASGKTTLAKRLAESLSPRFKVLLTQEPFTDDIKQLLEKYQWKDQVLLALLFSADRRIHVKWMESQNVDLIISDRYFFSTLAYQGVGVDRTWLESLSSIFPLPNLTILLDVPVNVALERLRNKRDSLDFEEKRKSLHQVRENYLSLARRYNFKILDGTLPLEKLTSISLELVQGLLSSSTSRGSQGT.

Residue 8 to 15 participates in ATP binding; the sequence is GIDASGKT.

The protein belongs to the thymidylate kinase family.

The catalysed reaction is dTMP + ATP = dTDP + ADP. The sequence is that of Probable thymidylate kinase from Metallosphaera sedula (strain ATCC 51363 / DSM 5348 / JCM 9185 / NBRC 15509 / TH2).